Reading from the N-terminus, the 449-residue chain is MLPAATASLLGPLLTACALLPFAQGQTPNYTRPVFLCGGDVKGESGYVASEGFPNLYPPNKECIWTITVPEGQTVSLSFRVFDLELHPACRYDALEVFAGSGTSGQRLGRFCGTFRPAPLVAPGNQVTLRMTTDEGTGGRGFLLWYSGRATSGTEHQFCGGRLEKAQGTLTTPNWPESDYPPGISCSWHIIAPPDQVIALTFEKFDLEPDTYCRYDSVSVFNGAVSDDSRRLGKFCGDAVPGSISSEGNELLVQFVSDLSVTADGFSASYKTLPRGTAKEGQGPGPKRGTEPKVKLPPKSQPPEKTEESPSAPDAPTCPKQCRRTGTLQSNFCASSLVVTATVKSMVREPGEGLAVTVSLIGAYKTGGLDLPSPPTGASLKFYVPCKQCPPMKKGVSYLLMGQVEENRGPVLPPESFVVLHRPNQDQILTNLSKRKCPSQPVRAAASQD.

A signal peptide spans 1–25 (MLPAATASLLGPLLTACALLPFAQG). N-linked (GlcNAc...) asparagine glycosylation occurs at N29. 7 disulfides stabilise this stretch: C37–C63, C90–C112, C159–C186, C213–C236, C318–C386, C322–C389, and C333–C437. CUB domains follow at residues 37–149 (CGGD…YSGR) and 159–273 (CGGR…YKTL). Phosphoserine is present on S50. The disordered stretch occupies residues 271–321 (KTLPRGTAKEGQGPGPKRGTEPKVKLPPKSQPPEKTEESPSAPDAPTCPKQ). The NTR domain occupies 318 to 437 (CPKQCRRTGT…ILTNLSKRKC (120 aa)). A glycan (N-linked (GlcNAc...) asparagine) is linked at N431.

As to quaternary structure, interacts with EFEMP2. C-terminally processed at multiple positions.

The protein localises to the secreted. Its function is as follows. Binds to the C-terminal propeptide of type I procollagen and enhances procollagen C-proteinase activity. C-terminal processed part of PCPE (CT-PCPE) may have an metalloproteinase inhibitory activity. In Homo sapiens (Human), this protein is Procollagen C-endopeptidase enhancer 1 (PCOLCE).